Here is a 411-residue protein sequence, read N- to C-terminus: MRLLSPVTGSKLVLLFLFLGAVRSDALKLNLTDSKGTCLYAEWEMNFTITYEALKVNETVTITVPDKVTYNGSSCGDDKNGAKIMIQYGSTLSWAVNFTKEASQYFINNITLSYNTNDTKTFPGAVPKGILTVIIPVGSQLPLGVIFKCSSVLTFNLSPVVQHYWGIHLQAFVQNGTVSKHEQVCKEDKTATTVAPIIHTTVPSPTTTLTPTSIPVPTPTVGNYTISNGNATCLLATMGLQLNITEEKVPFIFNINPAITNFTGSCQPQTAQLRLNNSQIKYLDFIFAVKNEKRFYLKEVNVNMYLANGSAFHVSNNNLSFWDAPLGSSYMCNKEQVVSVSRTFQINTFNLKVQPFNVTKGEYSTAQDCSADEDNFLVPIAVGAALGGVLILVLLAYFIGLKRHHTGYEQF.

The signal sequence occupies residues 1–26 (MRLLSPVTGSKLVLLFLFLGAVRSDA). Residues 27–188 (LKLNLTDSKG…SKHEQVCKED (162 aa)) form a first lumenal domain region. Residues 27 to 376 (LKLNLTDSKG…QDCSADEDNF (350 aa)) are Lumenal-facing. An intrachain disulfide couples C38 to C75. N-linked (GlcNAc...) asparagine glycans are attached at residues N46, N57, N71, N97, N109, N117, N175, N223, N230, N243, N261, N276, N308, N318, and N357. C149 and C185 are oxidised to a cystine. The tract at residues 189–229 (KTATTVAPIIHTTVPSPTTTLTPTSIPVPTPTVGNYTISNG) is hinge. Residues 230-376 (NATCLLATMG…QDCSADEDNF (147 aa)) are second lumenal domain. The cysteines at positions 233 and 266 are disulfide-linked. C332 and C369 are joined by a disulfide. A helical transmembrane segment spans residues 377 to 400 (LVPIAVGAALGGVLILVLLAYFIG). Residues 401-411 (LKRHHTGYEQF) are Cytoplasmic-facing. Positions 402–405 (KRHH) are important for binding and subsequent lysosomal degradation of target proteins.

It belongs to the LAMP family. As to quaternary structure, monomer. Forms large homooligomers. Interacts (via its cytoplasmic region) with HSPA8; HSPA8 mediates recruitment of proteins with a KFERQ motif to the surface of the lysosome for chaperone-mediated autophagy. Interacts with HSP90 in the lysosome lumen; this enhances LAMP2 stability. Interacts with MLLT11. Interacts with ABCB9. Interacts with FURIN. Interacts with CT55; this interaction may be important for LAMP2 protein stability. Interacts with TMEM175; inhibiting the proton channel activity of TMEM175. Forms a ternary complex with RAB7A and RUFY4 (via RUN domain); the interaction with RAB7A is mediated by RUFY4 (via RUN and coiled coil domains). Extensively N-glycosylated. Contains a minor proportion of O-linked glycans. Contains sialylated glycans. As to expression, detected in liver, kidney, spleen and macrophages (at protein level).

It is found in the lysosome membrane. The protein localises to the endosome membrane. It localises to the cell membrane. Its subcellular location is the cytoplasmic vesicle. The protein resides in the autophagosome membrane. Functionally, lysosomal membrane glycoprotein which plays an important role in lysosome biogenesis, lysosomal pH regulation and autophagy. Acts as an important regulator of lysosomal lumen pH regulation by acting as a direct inhibitor of the proton channel TMEM175, facilitating lysosomal acidification for optimal hydrolase activity. Plays an important role in chaperone-mediated autophagy, a process that mediates lysosomal degradation of proteins in response to various stresses and as part of the normal turnover of proteins with a long biological half-live. Functions by binding target proteins, such as GAPDH, NLRP3 and MLLT11, and targeting them for lysosomal degradation. In the chaperone-mediated autophagy, acts downstream of chaperones, such as HSPA8/HSC70, which recognize and bind substrate proteins and mediate their recruitment to lysosomes, where target proteins bind LAMP2. Plays a role in lysosomal protein degradation in response to starvation. Required for the fusion of autophagosomes with lysosomes during autophagy. Cells that lack LAMP2 express normal levels of VAMP8, but fail to accumulate STX17 on autophagosomes, which is the most likely explanation for the lack of fusion between autophagosomes and lysosomes. Required for normal degradation of the contents of autophagosomes. Required for efficient MHC class II-mediated presentation of exogenous antigens via its function in lysosomal protein degradation; antigenic peptides generated by proteases in the endosomal/lysosomal compartment are captured by nascent MHC II subunits. Is not required for efficient MHC class II-mediated presentation of endogenous antigens. The chain is Lysosome-associated membrane glycoprotein 2 (Lamp2) from Rattus norvegicus (Rat).